The following is a 296-amino-acid chain: Light-independent protochlorophyllide reductase iron-sulfur ATP-binding protein (296 aa).

Residues 1–11 are compositionally biased toward basic and acidic residues; that stretch reads MTSTITRKEDG. Positions 1 to 20 are disordered; that stretch reads MTSTITRKEDGEGSVQVKQD. ATP is bound by residues 39 to 44 and Lys68; that span reads GIGKST. Ser43 provides a ligand contact to Mg(2+). 2 residues coordinate [4Fe-4S] cluster: Cys124 and Cys158. Position 209-210 (209-210) interacts with ATP; that stretch reads NR.

The protein belongs to the NifH/BchL/ChlL family. As to quaternary structure, homodimer. Protochlorophyllide reductase is composed of three subunits; ChlL, ChlN and ChlB. The cofactor is [4Fe-4S] cluster.

The catalysed reaction is chlorophyllide a + oxidized 2[4Fe-4S]-[ferredoxin] + 2 ADP + 2 phosphate = protochlorophyllide a + reduced 2[4Fe-4S]-[ferredoxin] + 2 ATP + 2 H2O. The protein operates within porphyrin-containing compound metabolism; chlorophyll biosynthesis (light-independent). Functionally, component of the dark-operative protochlorophyllide reductase (DPOR) that uses Mg-ATP and reduced ferredoxin to reduce ring D of protochlorophyllide (Pchlide) to form chlorophyllide a (Chlide). This reaction is light-independent. The L component serves as a unique electron donor to the NB-component of the complex, and binds Mg-ATP. This chain is Light-independent protochlorophyllide reductase iron-sulfur ATP-binding protein, found in Prochlorococcus marinus (strain NATL1A).